A 96-amino-acid polypeptide reads, in one-letter code: Cathelin (96 aa).

Position 1 is a pyrrolidone carboxylic acid (glutamine 1). The interval aspartate 31 to valine 50 is disordered. 2 cysteine pairs are disulfide-bonded: cysteine 55-cysteine 66 and cysteine 73-cysteine 90.

It belongs to the cathelicidin family.

The protein resides in the secreted. In terms of biological role, probably a microbicidal peptide. The chain is Cathelin from Sus scrofa (Pig).